Reading from the N-terminus, the 251-residue chain is D-aminoacyl-tRNA deacylase (251 aa).

Belongs to the DtdA deacylase family. In terms of assembly, monomer. The cofactor is Zn(2+).

It catalyses the reaction a D-aminoacyl-tRNA + H2O = a tRNA + a D-alpha-amino acid + H(+). It carries out the reaction glycyl-tRNA(Ala) + H2O = tRNA(Ala) + glycine + H(+). In terms of biological role, D-aminoacyl-tRNA deacylase with broad substrate specificity. By recycling D-aminoacyl-tRNA to D-amino acids and free tRNA molecules, this enzyme counteracts the toxicity associated with the formation of D-aminoacyl-tRNA entities in vivo. In Pyrobaculum calidifontis (strain DSM 21063 / JCM 11548 / VA1), this protein is D-aminoacyl-tRNA deacylase.